The chain runs to 172 residues: Transcriptional repressor NrdR (172 aa).

The segment at Cys3 to Cys34 is a zinc-finger region. The region spanning Leu46–Asp136 is the ATP-cone domain.

This sequence belongs to the NrdR family. The cofactor is Zn(2+).

Its function is as follows. Negatively regulates transcription of bacterial ribonucleotide reductase nrd genes and operons by binding to NrdR-boxes. The chain is Transcriptional repressor NrdR from Nocardioides sp. (strain ATCC BAA-499 / JS614).